Consider the following 645-residue polypeptide: Envelope glycoprotein (645 aa).

The N-terminal stretch at 1-33 is a signal peptide; the sequence is MESPAFSKPLKDKINPWGPLIIMGILVRAGASV. Residues 32 to 237 are receptor-binding domain (RBD); that stretch reads SVQRDSPHQV…QVLNVGPRVP (206 aa). The Extracellular portion of the chain corresponds to 34-585; sequence QRDSPHQVFN…FNRSPWFTTL (552 aa). 2 N-linked (GlcNAc...) asparagine; by host glycosylation sites follow: Asn-43 and Asn-58. 2 cysteine pairs are disulfide-bonded: Cys-113/Cys-130 and Cys-122/Cys-135. Residues 259–286 are disordered; the sequence is PRPPRPPPSGAASMVPGAPPPSQQPGTG. N-linked (GlcNAc...) asparagine; by host glycosylation is present at Asn-301. Cystine bridges form between Cys-311–Cys-314, Cys-311–Cys-538, Cys-341–Cys-395, Cys-360–Cys-372, Cys-402–Cys-415, and Cys-530–Cys-537. The CXXC signature appears at 311 to 314; sequence CWLC. Asn-333 and Asn-340 each carry an N-linked (GlcNAc...) asparagine; by host glycan. Asn-373 and Asn-409 each carry an N-linked (GlcNAc...) asparagine; by host glycan. The interval 447-467 is fusion peptide; the sequence is VSLTLALLLGGLTMGGIAAGV. The stretch at 490 to 510 forms a coiled coil; sequence DLGALEKSVSALEKSLTSLSE. Residues 513–529 are immunosuppression; sequence LQNRRGLDLLFLKEGGL. Positions 530–538 match the CX6CC motif; sequence CAALKKECC. Residues 586–606 form a helical membrane-spanning segment; sequence ISTIMGPLIVLLLILLFGPCI. Residue Cys-605 is the site of S-palmitoyl cysteine; by host attachment. Residues 607–640 are Cytoplasmic-facing; it reads LNRLVQFVKDRISVVQALVLTQQYHQLKSIDPEE. The YXXL motif; contains endocytosis signal motif lies at 630-633; that stretch reads YHQL.

The mature envelope protein (Env) consists of a trimer of SU-TM heterodimers attached by a labile interchain disulfide bond. The activated Env consists of SU monomers and TM trimers. Post-translationally, specific enzymatic cleavages in vivo yield mature proteins. Envelope glycoproteins are synthesized as an inactive precursor that is N-glycosylated and processed likely by host cell furin or by a furin-like protease in the Golgi to yield the mature SU and TM proteins. The cleavage site between SU and TM requires the minimal sequence [KR]-X-[KR]-R. The R-peptide is released from the C-terminus of the cytoplasmic tail of the TM protein upon particle formation as a result of proteolytic cleavage by the viral protease. Cleavage of this peptide is required for TM to become fusogenic. The CXXC motif is highly conserved across a broad range of retroviral envelope proteins. It is thought to participate in the formation of a labile disulfide bond possibly with the CX6CC motif present in the transmembrane protein. Isomerization of the intersubunit disulfide bond to an SU intrachain disulfide bond is thought to occur upon receptor recognition in order to allow membrane fusion. In terms of processing, the transmembrane protein is palmitoylated. Post-translationally, the R-peptide is palmitoylated.

It is found in the virion membrane. The protein localises to the host cell membrane. The surface protein (SU) attaches the virus to the host cell by binding to its receptor. This interaction activates a thiol in a CXXC motif of the C-terminal domain, where the other Cys residue participates in the formation of the intersubunit disulfide. The activated thiol will attack the disulfide and cause its isomerization into a disulfide isomer within the motif. This leads to SU displacement and TM refolding, and is thought to activate its fusogenic potential by unmasking its fusion peptide. Fusion occurs at the host cell plasma membrane. Functionally, the transmembrane protein (TM) acts as a class I viral fusion protein. Under the current model, the protein has at least 3 conformational states: pre-fusion native state, pre-hairpin intermediate state, and post-fusion hairpin state. During viral and target cell membrane fusion, the coiled coil regions (heptad repeats) assume a trimer-of-hairpins structure, positioning the fusion peptide in close proximity to the C-terminal region of the ectodomain. The formation of this structure appears to drive apposition and subsequent fusion of viral and target cell membranes. Membranes fusion leads to delivery of the nucleocapsid into the cytoplasm. The sequence is that of Envelope glycoprotein (env) from Xenotropic MuLV-related virus (isolate VP35) (XMRV).